A 214-amino-acid chain; its full sequence is Large ribosomal subunit protein bL25 (214 aa).

It belongs to the bacterial ribosomal protein bL25 family. CTC subfamily. As to quaternary structure, part of the 50S ribosomal subunit; part of the 5S rRNA/L5/L18/L25 subcomplex. Contacts the 5S rRNA. Binds to the 5S rRNA independently of L5 and L18.

This is one of the proteins that binds to the 5S RNA in the ribosome where it forms part of the central protuberance. This is Large ribosomal subunit protein bL25 from Polynucleobacter necessarius subsp. necessarius (strain STIR1).